A 538-amino-acid polypeptide reads, in one-letter code: MPKLLKFNEEARRALERGVDKVANAVKITLGPKGRNVVIEKSWGSPTITNDGVSIAKEIELEDKFENLGAQLVKEVASKTNDVAGDGTTTATVLAQAMIKEGLKNVAAGANPILLKRGIDKAVERAVEEIKKLSKKLSGREDIAHVAAISANSPEIGELIAEAMDKVGEDGVITVEDSKTLETYVEFTEGMQFDRGYISPYFVTDAEKMEVVLKEPSILITDRKLSAVKPLIPILEKVAQTGKPLLVIAEDVEGEALTTLVLNKLKGTLQSCAVKAPGFGERRKAMLQDIAILTGGQVASEELGINLEDLTLEDLGRADLVRVKKDETIIIGGKGDPEAIKKRIAQIKAQIEETTSEYEKETLQERMAKLAGGVAVIKVGAATETELKEKKHRIEDALSATRAAVEEGIVPGGGVTLLRSRKAVEKLLEELDGDEKIGAQIVYKALSAPIRQIAENAGYDGAVIIEKILASDDPAYGFDALRGEFGNMFEKGIIDPAKVTRSALQNAASIAGMLLTTEVLVVEKPEEKKETPSLPEEY.

ATP is bound by residues 29-32 (TLGP), 86-90 (DGTTT), Gly413, 479-481 (DAL), and Asp495.

This sequence belongs to the chaperonin (HSP60) family. As to quaternary structure, forms a cylinder of 14 subunits composed of two heptameric rings stacked back-to-back. Interacts with the co-chaperonin GroES.

It is found in the cytoplasm. It catalyses the reaction ATP + H2O + a folded polypeptide = ADP + phosphate + an unfolded polypeptide.. Its function is as follows. Together with its co-chaperonin GroES, plays an essential role in assisting protein folding. The GroEL-GroES system forms a nano-cage that allows encapsulation of the non-native substrate proteins and provides a physical environment optimized to promote and accelerate protein folding. This chain is Chaperonin GroEL, found in Thermotoga neapolitana.